Here is a 216-residue protein sequence, read N- to C-terminus: MSMDFSDQRLSYEKGQLDQQSIPASPFELLNVWMQQAIEENVQEPYAMSLATCGADNKPSVRIVLLREITDKGIVFYTNYESAKGQDIAENPNVEALFFWHKLERQIRISGSIAKIDADKSAAYFQKRPHDSQVGAWVSQPQSGEVANRDVMEQTFEQLKIDYPEGAAVPTPEFWGGYEITVNEIEFWQGRANRMHDRIVYHKEADGSFSTKRLLP.

Residues Arg-9–Tyr-12 and Arg-67 each bind substrate. FMN contacts are provided by residues Arg-62 to Arg-67, Tyr-77 to Thr-78, Lys-84, and Gln-106. The substrate site is built by Tyr-124, Arg-128, and Ser-132. Residues Gln-142–Ser-143 and Trp-188 each bind FMN. Residue Arg-194–His-196 coordinates substrate. FMN is bound at residue Arg-198.

The protein belongs to the pyridoxamine 5'-phosphate oxidase family. In terms of assembly, homodimer. It depends on FMN as a cofactor.

The catalysed reaction is pyridoxamine 5'-phosphate + O2 + H2O = pyridoxal 5'-phosphate + H2O2 + NH4(+). It catalyses the reaction pyridoxine 5'-phosphate + O2 = pyridoxal 5'-phosphate + H2O2. Its pathway is cofactor metabolism; pyridoxal 5'-phosphate salvage; pyridoxal 5'-phosphate from pyridoxamine 5'-phosphate: step 1/1. It functions in the pathway cofactor metabolism; pyridoxal 5'-phosphate salvage; pyridoxal 5'-phosphate from pyridoxine 5'-phosphate: step 1/1. Functionally, catalyzes the oxidation of either pyridoxine 5'-phosphate (PNP) or pyridoxamine 5'-phosphate (PMP) into pyridoxal 5'-phosphate (PLP). The polypeptide is Pyridoxine/pyridoxamine 5'-phosphate oxidase (Psychrobacter cryohalolentis (strain ATCC BAA-1226 / DSM 17306 / VKM B-2378 / K5)).